Reading from the N-terminus, the 94-residue chain is uncharacterized protein (94 aa).

This is an uncharacterized protein from Treponema pallidum (strain Nichols).